The following is a 271-amino-acid chain: Putative mitochondrial carrier protein PET8 (271 aa).

Solcar repeat units lie at residues 3-76, 91-177, and 187-270; these read STFL…MKQQ, AEVL…LKKK, and VSAW…VHSL. The next 6 helical transmembrane spans lie at 6 to 26, 51 to 71, 97 to 117, 152 to 168, 193 to 213, and 251 to 271; these read LASL…FFPI, GLGS…VTYD, MLSS…AEVI, GWWT…CIQF, AVCG…LDVL, and MWIS…HSLF.

Belongs to the mitochondrial carrier (TC 2.A.29) family.

The protein localises to the mitochondrion inner membrane. In Eremothecium gossypii (strain ATCC 10895 / CBS 109.51 / FGSC 9923 / NRRL Y-1056) (Yeast), this protein is Putative mitochondrial carrier protein PET8 (PET8).